The following is a 288-amino-acid chain: Probable prolyl 4-hydroxylase 6 (288 aa).

The Cytoplasmic segment spans residues 1 to 4; that stretch reads MDSQ. A helical; Signal-anchor for type II membrane protein membrane pass occupies residues 5–27; that stretch reads YFLAFSLSLLLIFSQISSFSFSV. The Lumenal portion of the chain corresponds to 28 to 288; that stretch reads DPTRITQLSW…GFCRKSCKAC (261 aa). The 123-residue stretch at 116-238 folds into the Fe2OG dioxygenase domain; that stretch reads NGEALQILHY…KWSATRWIHV (123 aa). Residues H134 and D136 each contribute to the Fe cation site. Residues N160 and N210 are each glycosylated (N-linked (GlcNAc...) asparagine). Fe cation is bound at residue H219. Residue K229 coordinates 2-oxoglutarate. The ShKT domain occupies 248–288; it reads CVDDHESCQEWADAGECEKNPMYMVGSETSLGFCRKSCKAC. 3 disulfide bridges follow: C248-C288, C255-C281, and C264-C285.

Belongs to the P4HA family. Fe(2+) serves as cofactor. The cofactor is L-ascorbate.

It is found in the endoplasmic reticulum membrane. It catalyses the reaction L-prolyl-[collagen] + 2-oxoglutarate + O2 = trans-4-hydroxy-L-prolyl-[collagen] + succinate + CO2. Its function is as follows. Catalyzes the post-translational formation of 4-hydroxyproline in -Xaa-Pro-Gly- sequences in proline-rich peptide sequences of plant glycoproteins and other proteins. Hydroxyprolines are important constituent of many plant cell wall glycoproteins such as extensins, hydroxyproline-rich glycoproteins, lectins and arabinogalactan proteins. The chain is Probable prolyl 4-hydroxylase 6 from Arabidopsis thaliana (Mouse-ear cress).